We begin with the raw amino-acid sequence, 100 residues long: MARKSLIQRERKRQKLEQKYHLIRRSSKKEISKVPSLSDKWEIHGKLQSSPRNSAPTRLHRRCFLTGRPGANYRYFGLSGHILREMVHACLLPGATRSSW.

It belongs to the universal ribosomal protein uS14 family. Part of the 30S ribosomal subunit.

It is found in the plastid. The protein localises to the chloroplast. In terms of biological role, binds 16S rRNA, required for the assembly of 30S particles. This chain is Small ribosomal subunit protein uS14c, found in Vitis vinifera (Grape).